The chain runs to 166 residues: Small ribosomal subunit protein uS5 (166 aa).

One can recognise an S5 DRBM domain in the interval 11–74; it reads LQEKLIAVNR…EKARRNMINV (64 aa).

It belongs to the universal ribosomal protein uS5 family. In terms of assembly, part of the 30S ribosomal subunit. Contacts proteins S4 and S8.

In terms of biological role, with S4 and S12 plays an important role in translational accuracy. Its function is as follows. Located at the back of the 30S subunit body where it stabilizes the conformation of the head with respect to the body. The protein is Small ribosomal subunit protein uS5 of Enterobacter sp. (strain 638).